Consider the following 326-residue polypeptide: Neuferricin homolog (326 aa).

A signal peptide spans 1-34; that stretch reads MEKNRRKKDDAGVMTKTLAGVAALTFLVSFICSS. The Cytochrome b5 heme-binding domain occupies 98–197; the sequence is KHVFTPEQLH…KEYPLVGVVA (100 aa).

This sequence belongs to the cytochrome b5 family. MAPR subfamily.

Its subcellular location is the secreted. Heme-binding protein. The protein is Neuferricin homolog of Caenorhabditis briggsae.